We begin with the raw amino-acid sequence, 335 residues long: Protein-arginine kinase (335 aa).

One can recognise a Phosphagen kinase C-terminal domain in the interval 21-244 (IVMSSRIRLA…NQIIHEEKQI (224 aa)). ATP-binding positions include 24 to 28 (SSRIR), His-82, Arg-115, 166 to 170 (RASVM), and 197 to 202 (RGIYGE).

It belongs to the ATP:guanido phosphotransferase family.

It catalyses the reaction L-arginyl-[protein] + ATP = N(omega)-phospho-L-arginyl-[protein] + ADP + H(+). In terms of biological role, catalyzes the specific phosphorylation of arginine residues in proteins. The polypeptide is Protein-arginine kinase (Staphylococcus aureus (strain USA300)).